A 384-amino-acid polypeptide reads, in one-letter code: MLAPMAGVTNVTFRTLCREFGSTRGNLLRPAPPHLRSPLEQSQVGTISGLYVCEMVTARALVERNAVTIHMTTFAPDESPRSLQLYTVDPATTYTAAKMVADEGLADHIDMNFGCPMPKVTRRGGGAALPYKRRLFGQIVAAAVRATEGTKIPVTVKFRIGIDDEHHTHLDAGRIAEAEGAAAVALHARTAAQRYSGTADWAQIAQLKQQVRTIPVLGNGDIYDASDALAMMAVTGCDGVVIGRGCLGRPWLFAELSAAFTGRPAPAPPTLGEVAEIVRRHGKLLVAHFGEDKGMRDIRKHIAWYLHGFPAGSELRNALALVKTLDELDCLLNRLDGAVPFPDAAIGPRGRQGSPAWVALPDSWLTDPDDCTVPIGADIMESGG.

Residues 4–6 (PMA) and Gln-84 each bind FMN. Cys-115 (proton donor) is an active-site residue. Residues Lys-157, 219 to 221 (NGD), and 243 to 244 (GR) contribute to the FMN site.

This sequence belongs to the Dus family. Requires FMN as cofactor.

The enzyme catalyses a 5,6-dihydrouridine in tRNA + NAD(+) = a uridine in tRNA + NADH + H(+). It carries out the reaction a 5,6-dihydrouridine in tRNA + NADP(+) = a uridine in tRNA + NADPH + H(+). In terms of biological role, catalyzes the synthesis of 5,6-dihydrouridine (D), a modified base found in the D-loop of most tRNAs, via the reduction of the C5-C6 double bond in target uridines. The chain is Probable tRNA-dihydrouridine synthase (dus) from Mycobacterium leprae (strain TN).